A 181-amino-acid chain; its full sequence is Probable pyruvoyl-dependent arginine decarboxylase (181 aa).

The residue at position 43 (serine 43) is a Pyruvic acid (Ser).

It belongs to the PdaD family. It depends on pyruvate as a cofactor.

The enzyme catalyses L-arginine + H(+) = agmatine + CO2. The polypeptide is Probable pyruvoyl-dependent arginine decarboxylase (Prosthecochloris aestuarii (strain DSM 271 / SK 413)).